The primary structure comprises 160 residues: Eukaryotic translation initiation factor 5A (160 aa).

Basic and acidic residues predominate over residues 1 to 10 (MSDDDHHFES). The disordered stretch occupies residues 1–23 (MSDDDHHFESSADAGASKTYPQQ). Residue Lys52 is modified to Hypusine.

It belongs to the eIF-5A family. Post-translationally, lys-52 undergoes hypusination, a unique post-translational modification that consists in the addition of a butylamino group from spermidine to lysine side chain, leading to the formation of the unusual amino acid hypusine. eIF-5As are the only known proteins to undergo this modification, which is essential for their function.

In terms of biological role, translation factor that promotes translation elongation and termination, particularly upon ribosome stalling at specific amino acid sequence contexts. Binds between the exit (E) and peptidyl (P) site of the ribosome and promotes rescue of stalled ribosome: specifically required for efficient translation of polyproline-containing peptides as well as other motifs that stall the ribosome. Acts as a ribosome quality control (RQC) cofactor by joining the RQC complex to facilitate peptidyl transfer during CAT tailing step. In Dianthus caryophyllus (Carnation), this protein is Eukaryotic translation initiation factor 5A.